The sequence spans 210 residues: Imidazoleglycerol-phosphate dehydratase (210 aa).

Belongs to the imidazoleglycerol-phosphate dehydratase family.

The protein resides in the cytoplasm. The catalysed reaction is D-erythro-1-(imidazol-4-yl)glycerol 3-phosphate = 3-(imidazol-4-yl)-2-oxopropyl phosphate + H2O. Its pathway is amino-acid biosynthesis; L-histidine biosynthesis; L-histidine from 5-phospho-alpha-D-ribose 1-diphosphate: step 6/9. The polypeptide is Imidazoleglycerol-phosphate dehydratase (Mycobacterium leprae (strain Br4923)).